Consider the following 215-residue polypeptide: Adenylate kinase (215 aa).

Residue 10-15 (GAGKGT) coordinates ATP. Positions 30–60 (STGDMLRAAIIKAGTEMGKQAKSVIDAGQLV) are NMP. Residues threonine 31, arginine 36, 58-60 (QLV), 86-89 (GFPR), and glutamine 93 each bind AMP. The segment at 123-160 (GRRAHLPSGRTYHVTFNPSKVEGQDDVTGEPLVIREDD) is LID. Residues arginine 124 and 133-134 (TY) contribute to the ATP site. The AMP site is built by arginine 157 and arginine 168. Lysine 201 is an ATP binding site.

The protein belongs to the adenylate kinase family. As to quaternary structure, monomer.

Its subcellular location is the cytoplasm. It catalyses the reaction AMP + ATP = 2 ADP. Its pathway is purine metabolism; AMP biosynthesis via salvage pathway; AMP from ADP: step 1/1. Catalyzes the reversible transfer of the terminal phosphate group between ATP and AMP. Plays an important role in cellular energy homeostasis and in adenine nucleotide metabolism. The chain is Adenylate kinase from Aliivibrio salmonicida (strain LFI1238) (Vibrio salmonicida (strain LFI1238)).